The primary structure comprises 212 residues: Uracil phosphoribosyltransferase (212 aa).

5-phospho-alpha-D-ribose 1-diphosphate contacts are provided by residues R78, R103, and 130-138 (DPMLATGGS). Uracil contacts are provided by residues I193 and 198-200 (GDA). D199 is a 5-phospho-alpha-D-ribose 1-diphosphate binding site.

The protein belongs to the UPRTase family. The cofactor is Mg(2+).

It catalyses the reaction UMP + diphosphate = 5-phospho-alpha-D-ribose 1-diphosphate + uracil. The protein operates within pyrimidine metabolism; UMP biosynthesis via salvage pathway; UMP from uracil: step 1/1. Allosterically activated by GTP. In terms of biological role, catalyzes the conversion of uracil and 5-phospho-alpha-D-ribose 1-diphosphate (PRPP) to UMP and diphosphate. The chain is Uracil phosphoribosyltransferase from Stutzerimonas stutzeri (strain A1501) (Pseudomonas stutzeri).